A 426-amino-acid chain; its full sequence is Dihydrofolate synthase/folylpolyglutamate synthase (426 aa).

58-61 (GKGS) is an ATP binding site. Ser-82 lines the Mg(2+) pocket. 121–124 (TRFE) is a 7,8-dihydropteroate binding site. Mg(2+) is bound at residue Glu-145. Position 152-154 (152-154 (LDA)) interacts with 7,8-dihydropteroate. Mg(2+) is bound at residue His-172. Arg-289 and Asp-302 together coordinate ATP.

The protein belongs to the folylpolyglutamate synthase family. Monomer. Mg(2+) is required as a cofactor.

It carries out the reaction 7,8-dihydropteroate + L-glutamate + ATP = 7,8-dihydrofolate + ADP + phosphate + H(+). It catalyses the reaction (6S)-5,6,7,8-tetrahydrofolyl-(gamma-L-Glu)(n) + L-glutamate + ATP = (6S)-5,6,7,8-tetrahydrofolyl-(gamma-L-Glu)(n+1) + ADP + phosphate + H(+). The enzyme catalyses 10-formyltetrahydrofolyl-(gamma-L-Glu)(n) + L-glutamate + ATP = 10-formyltetrahydrofolyl-(gamma-L-Glu)(n+1) + ADP + phosphate + H(+). The catalysed reaction is (6R)-5,10-methylenetetrahydrofolyl-(gamma-L-Glu)(n) + L-glutamate + ATP = (6R)-5,10-methylenetetrahydrofolyl-(gamma-L-Glu)(n+1) + ADP + phosphate + H(+). It functions in the pathway cofactor biosynthesis; tetrahydrofolate biosynthesis; 7,8-dihydrofolate from 2-amino-4-hydroxy-6-hydroxymethyl-7,8-dihydropteridine diphosphate and 4-aminobenzoate: step 2/2. The protein operates within cofactor biosynthesis; tetrahydrofolylpolyglutamate biosynthesis. In terms of biological role, functions in two distinct reactions of the de novo folate biosynthetic pathway. Catalyzes the addition of a glutamate residue to dihydropteroate (7,8-dihydropteroate or H2Pte) to form dihydrofolate (7,8-dihydrofolate monoglutamate or H2Pte-Glu). Also catalyzes successive additions of L-glutamate to tetrahydrofolate or 10-formyltetrahydrofolate or 5,10-methylenetetrahydrofolate, leading to folylpolyglutamate derivatives. The polypeptide is Dihydrofolate synthase/folylpolyglutamate synthase (folC) (Buchnera aphidicola subsp. Baizongia pistaciae (strain Bp)).